The primary structure comprises 212 residues: Small ribosomal subunit protein eS6 (212 aa).

Belongs to the eukaryotic ribosomal protein eS6 family.

The chain is Small ribosomal subunit protein eS6 from Metallosphaera sedula (strain ATCC 51363 / DSM 5348 / JCM 9185 / NBRC 15509 / TH2).